A 420-amino-acid chain; its full sequence is Mannose-1-phosphate guanylyltransferase regulatory subunit alpha (420 aa).

The interval leucine 2 to alanine 251 is substrate-binding domain. GDP-alpha-D-mannose-binding residues include glutamate 85 and glutamine 247. Positions leucine 273 to leucine 420 are hexapeptide repeat domain. A C-loop region spans residues threonine 356 to isoleucine 384.

Belongs to the transferase hexapeptide repeat family. As to quaternary structure, component of the GMPPA-GMPPB mannose-1-phosphate guanylyltransferase complex composed of 4 GMPPA subunits and 8 GMPPB subunits; the complex is organized into three layers, a central layer made up of 2 GMPPA dimers sandwiched between two layers each made up of 2 GMPPB dimers.

It localises to the cytoplasm. Regulatory subunit of the GMPPA-GMPPB mannose-1-phosphate guanylyltransferase complex; reduces the catalytic activity of GMPPB when part of the complex. Mediates allosteric feedback inhibition of GMPPB catalytic activity upon binding GDP-alpha-D-mannose. Together with GMPPB regulates GDP-alpha-D-mannose levels. This is Mannose-1-phosphate guanylyltransferase regulatory subunit alpha (Gmppa) from Rattus norvegicus (Rat).